The following is a 240-amino-acid chain: Proteasome subunit beta 1 (240 aa).

Positions Met-1–Gly-46 are cleaved as a propeptide — removed in mature form; by autocatalysis. Positions Met-1–Thr-48 are disordered. The active-site Nucleophile is the Thr-47.

Belongs to the peptidase T1B family. In terms of assembly, the 20S proteasome core is composed of 14 alpha and 14 beta subunits that assemble into four stacked heptameric rings, resulting in a barrel-shaped structure. The two inner rings, each composed of seven catalytic beta subunits, are sandwiched by two outer rings, each composed of seven alpha subunits. The catalytic chamber with the active sites is on the inside of the barrel. Has a gated structure, the ends of the cylinder being occluded by the N-termini of the alpha-subunits. Is capped at one or both ends by the proteasome regulatory ATPase, PAN.

It localises to the cytoplasm. The catalysed reaction is Cleavage of peptide bonds with very broad specificity.. The formation of the proteasomal ATPase PAN-20S proteasome complex, via the docking of the C-termini of PAN into the intersubunit pockets in the alpha-rings, triggers opening of the gate for substrate entry. Interconversion between the open-gate and close-gate conformations leads to a dynamic regulation of the 20S proteasome proteolysis activity. Component of the proteasome core, a large protease complex with broad specificity involved in protein degradation. The chain is Proteasome subunit beta 1 from Haloarcula marismortui (strain ATCC 43049 / DSM 3752 / JCM 8966 / VKM B-1809) (Halobacterium marismortui).